Consider the following 314-residue polypeptide: MAKGIMTYDVGEQVDLHLLIKSSTKGIASNGKPFLTLILQDQSGDIEAKLWDAKQNDEQTYAAQTIVKVVGDIHHYRGRNQLKLRNIRPVAENEQIRIDDFLETAPIPKHDMMDTIMQYIFDMKNPNIQRVTRHLLKKYGQEFADYPAATKNHHEFVSGLAYHVVSMLHLAKSIVDLYPSLDRDLLYSGIILHDLGKVKELSGPVSTTYTVEGNLIGHISIMVTEIAKAAEELGIDSEEILILQHLVLSHHGKGEWGSPKPPMVKEAEILHYIDNLDAKMNMMDRALEHVKPGEYTERIFALENRSFYKPTFHE.

The region spanning His163 to Lys279 is the HD domain.

This sequence belongs to the YhaM family.

Its function is as follows. Shows a 3'-5' exoribonuclease activity. The polypeptide is 3'-5' exoribonuclease YhaM (Bacillus pumilus (strain SAFR-032)).